The primary structure comprises 437 residues: MKVYIETMGCAMNSRDSEHLLSELSKLDYKETSDPKMADLILINTCSVREKPERKLFSEIGQFAKIKKPNAKIGVCGCTASHMGADILKKAPSVSFVLGARNVSKISQVIHKEKAVEVAIDYDESAYAFEFFEKKAQIRSLLNISIGCDKKCAYCIVPHTRGKEISIPMDLILKEAEKLANNGTKELMLLGQNVNNYGVRFSSEHAKVDFSDLLDKLSEIPGIERIRFTSPHPLHMNDGFLERFAKNPKVCKSIHMPLQSGSSAVLKMMRRGYSKEWFLNRVERLKALVPEVGISTDIIVGFPNESDKDFEDTMEVLEKVRFDTLYSFIYSPRPFTEAGAWKERVPLEVSSSRLERLQNRHKEILEEKAKLEVGKTHVVLVENRREMDNQIVGFEGRSDTGKFIEVTCKEKRNPGELVKVEIISHSKGRLIAAIKGN.

An MTTase N-terminal domain is found at 1 to 115 (MKVYIETMGC…ISQVIHKEKA (115 aa)). [4Fe-4S] cluster is bound by residues Cys10, Cys46, Cys78, Cys148, Cys152, and Cys155. The Radical SAM core domain occupies 134-367 (KKAQIRSLLN…QNRHKEILEE (234 aa)). Positions 370–436 (KLEVGKTHVV…KGRLIAAIKG (67 aa)) constitute a TRAM domain.

Belongs to the methylthiotransferase family. MiaB subfamily. Monomer. [4Fe-4S] cluster serves as cofactor.

It is found in the cytoplasm. The catalysed reaction is N(6)-dimethylallyladenosine(37) in tRNA + (sulfur carrier)-SH + AH2 + 2 S-adenosyl-L-methionine = 2-methylsulfanyl-N(6)-dimethylallyladenosine(37) in tRNA + (sulfur carrier)-H + 5'-deoxyadenosine + L-methionine + A + S-adenosyl-L-homocysteine + 2 H(+). Its function is as follows. Catalyzes the methylthiolation of N6-(dimethylallyl)adenosine (i(6)A), leading to the formation of 2-methylthio-N6-(dimethylallyl)adenosine (ms(2)i(6)A) at position 37 in tRNAs that read codons beginning with uridine. This is tRNA-2-methylthio-N(6)-dimethylallyladenosine synthase from Helicobacter pylori (strain P12).